Reading from the N-terminus, the 157-residue chain is Mini-ribonuclease 3 (157 aa).

The active site involves D18. The disordered stretch occupies residues 126–157; the sequence is EEDEGKGKGETAKEEESITDALSPAEQSEIDC. A compositionally biased stretch (basic and acidic residues) spans 130-141; the sequence is GKGKGETAKEEE.

This sequence belongs to the MrnC RNase family. As to quaternary structure, homodimer. Mg(2+) serves as cofactor.

It is found in the cytoplasm. Its function is as follows. Involved in correct processing of both the 5' and 3' ends of 23S rRNA precursor. Processes 30S rRNA precursor transcript even in absence of ribonuclease 3 (Rnc); Rnc processes 30S rRNA into smaller rRNA precursors. The protein is Mini-ribonuclease 3 of Desulfitobacterium hafniense (strain Y51).